A 518-amino-acid polypeptide reads, in one-letter code: Squalene monooxygenase 1,2 (518 aa).

2 consecutive transmembrane segments (helical) span residues 3-23 (MAFV…WTIF) and 48-68 (GPDV…YALA). Residues 58–59 (VG), 78–79 (ER), R86, F91, R158, V174, D337, and M350 contribute to the FAD site. Residues 448–468 (LFYHLFVISLSSIGQLLSPFP) traverse the membrane as a helical segment.

Belongs to the squalene monooxygenase family. Requires FAD as cofactor.

The protein resides in the membrane. The enzyme catalyses squalene + reduced [NADPH--hemoprotein reductase] + O2 = (S)-2,3-epoxysqualene + oxidized [NADPH--hemoprotein reductase] + H2O + H(+). The protein operates within terpene metabolism; lanosterol biosynthesis; lanosterol from farnesyl diphosphate: step 2/3. In terms of biological role, catalyzes the stereospecific oxidation of squalene to (S)-2,3-epoxysqualene, and is considered to be a rate-limiting enzyme in steroid biosynthesis. This is Squalene monooxygenase 1,2 (SQP1,2) from Brassica napus (Rape).